The chain runs to 632 residues: Acyl-coenzyme A oxidase-like protein (632 aa).

376–381 (TGGMGY) is an FAD binding site.

It belongs to the acyl-CoA oxidase family. FAD is required as a cofactor.

The chain is Acyl-coenzyme A oxidase-like protein (Acoxl) from Mus musculus (Mouse).